Reading from the N-terminus, the 41-residue chain is uncharacterized protein (41 aa).

This is an uncharacterized protein from Dictyostelium discoideum (Social amoeba).